The primary structure comprises 165 residues: UPF0114 protein in repA1-repA2 intergenic region (165 aa).

The next 3 helical transmembrane spans lie at 10-32 (YASRWLMFPVYIGLSFGFILLTL), 53-75 (LILIVLSLIDIALVGGLLVMVMF), and 136-155 (IMWCVIIHLTFVLSAFGMAC).

It belongs to the UPF0114 family.

The protein resides in the cell membrane. This Buchnera aphidicola subsp. Geoica urticularia protein is UPF0114 protein in repA1-repA2 intergenic region.